The chain runs to 387 residues: Phosphoglycerate kinase (387 aa).

Residues 21-23, R36, 59-62, R113, and R146 contribute to the substrate site; these read DLN and HLGR. ATP-binding positions include K197, E314, and 340-343; that span reads GGDT.

This sequence belongs to the phosphoglycerate kinase family. In terms of assembly, monomer.

Its subcellular location is the cytoplasm. The catalysed reaction is (2R)-3-phosphoglycerate + ATP = (2R)-3-phospho-glyceroyl phosphate + ADP. The protein operates within carbohydrate degradation; glycolysis; pyruvate from D-glyceraldehyde 3-phosphate: step 2/5. This Proteus mirabilis (strain HI4320) protein is Phosphoglycerate kinase.